The sequence spans 377 residues: WAT1-related protein At3g56620 (377 aa).

The next 10 membrane-spanning stretches (helical) occupy residues 13-33 (FAMV…KVVL), 40-60 (YVLV…FALL), 67-87 (PKMT…GPLI), 102-122 (TFAG…SIIC), 142-162 (LVIV…ITFL), 183-203 (VFLL…AATL), 210-230 (LSLS…LTFV), 235-255 (LSAW…AGIM), 274-294 (IFVT…GFLI), and 299-319 (LNLG…TVLW). EamA domains are found at residues 22–152 (YAGM…MLMI) and 190–318 (FSWA…CTVL).

This sequence belongs to the drug/metabolite transporter (DMT) superfamily. Plant drug/metabolite exporter (P-DME) (TC 2.A.7.4) family.

Its subcellular location is the membrane. This Arabidopsis thaliana (Mouse-ear cress) protein is WAT1-related protein At3g56620.